Reading from the N-terminus, the 302-residue chain is Giardin subunit alpha-5 (302 aa).

Annexin repeat units follow at residues 1 to 72, 74 to 144, 153 to 226, and 230 to 298; these read MTST…VNMW, SRHE…VAGW, GSVE…AAHF, and GLPV…TLWR.

The protein belongs to the annexin family. Giardin subunit alpha subfamily.

The protein localises to the cytoplasm. It localises to the cytoskeleton. Functionally, giardins are involved in parasite attachment to the intestinal mucosa and in the cytoskeletal disassembly and reassembly that marks the transition from infectious trophozoite to transmissible cyst. They may interact with other cytoskeletal proteins such as microtubules in the microribbons or crossbridges, to maintain the integrity of the ventral disk. The chain is Giardin subunit alpha-5 from Giardia intestinalis (Giardia lamblia).